The sequence spans 337 residues: Glyceraldehyde-3-phosphate dehydrogenase (337 aa).

NAD(+) is bound by residues 12–13 (RI), Asp-34, and Arg-79. D-glyceraldehyde 3-phosphate contacts are provided by residues 150-152 (SCT), Thr-181, 210-211 (TG), and Arg-233. Cys-151 acts as the Nucleophile in catalysis. Asn-315 is a binding site for NAD(+).

The protein belongs to the glyceraldehyde-3-phosphate dehydrogenase family. As to quaternary structure, homotetramer.

The protein localises to the cytoplasm. The enzyme catalyses D-glyceraldehyde 3-phosphate + phosphate + NAD(+) = (2R)-3-phospho-glyceroyl phosphate + NADH + H(+). It functions in the pathway carbohydrate degradation; glycolysis; pyruvate from D-glyceraldehyde 3-phosphate: step 1/5. The sequence is that of Glyceraldehyde-3-phosphate dehydrogenase (GPD-1) from Claviceps purpurea (strain 20.1) (Ergot fungus).